The sequence spans 438 residues: 2-(3-amino-3-carboxypropyl)histidine synthase subunit 1 (438 aa).

The interval 7–29 (SGAAEQGGRDGPGRGRAPRGRVA) is disordered. [4Fe-4S] cluster-binding residues include C110, C214, and C342. Positions 391–421 (VNHGQDRRPHAPGRPARGKVQEGSARPPSAV) are disordered.

It belongs to the DPH1/DPH2 family. DPH1 subfamily. As to quaternary structure, component of the 2-(3-amino-3-carboxypropyl)histidine synthase complex composed of DPH1, DPH2, DPH3 and a NADH-dependent reductase. Interacts with DPH2. Interacts with RBM8A. Requires [4Fe-4S] cluster as cofactor. In terms of tissue distribution, expressed in heart, brain, placenta, lung, liver, skeletal muscle, kidney, pancreas, spleen, thymus, mammary gland, colon, small intestine, testis and ovary. Reduced expression in primary breast and ovarian tumors.

Its subcellular location is the nucleus. The protein localises to the cytoplasm. The enzyme catalyses L-histidyl-[translation elongation factor 2] + S-adenosyl-L-methionine = 2-[(3S)-amino-3-carboxypropyl]-L-histidyl-[translation elongation factor 2] + S-methyl-5'-thioadenosine + H(+). It functions in the pathway protein modification; peptidyl-diphthamide biosynthesis. In terms of biological role, catalyzes the first step of diphthamide biosynthesis, a post-translational modification of histidine which occurs in elongation factor 2. DPH1 and DPH2 transfer a 3-amino-3-carboxypropyl (ACP) group from S-adenosyl-L-methionine (SAM) to a histidine residue, the reaction is assisted by a reduction system comprising DPH3 and a NADH-dependent reductase. Acts as a tumor suppressor. This is 2-(3-amino-3-carboxypropyl)histidine synthase subunit 1 from Homo sapiens (Human).